The following is a 104-amino-acid chain: Protein translation factor SUI1 homolog (104 aa).

This sequence belongs to the SUI1 family.

In Ignicoccus hospitalis (strain KIN4/I / DSM 18386 / JCM 14125), this protein is Protein translation factor SUI1 homolog.